We begin with the raw amino-acid sequence, 490 residues long: Homoserine O-acetyltransferase (490 aa).

Positions 47–355 constitute an AB hydrolase-1 domain; that stretch reads NAILVCHALT…DYGHDAFLLE (309 aa). Ser-152 acts as the Nucleophile in catalysis. Arg-222 lines the substrate pocket. Catalysis depends on residues Asp-316 and His-349. Residue Asp-350 participates in substrate binding. 2 CBS domains span residues 376–436 and 437–490; these read MKTD…LEDV and MTKD…ISSY.

The protein belongs to the AB hydrolase superfamily. MetX family. Homodimer.

It localises to the cytoplasm. It catalyses the reaction L-homoserine + acetyl-CoA = O-acetyl-L-homoserine + CoA. It functions in the pathway amino-acid biosynthesis; L-methionine biosynthesis via de novo pathway; O-acetyl-L-homoserine from L-homoserine: step 1/1. Functionally, transfers an acetyl group from acetyl-CoA to L-homoserine, forming acetyl-L-homoserine. This Methanobrevibacter ruminantium (strain ATCC 35063 / DSM 1093 / JCM 13430 / OCM 146 / M1) (Methanobacterium ruminantium) protein is Homoserine O-acetyltransferase.